Reading from the N-terminus, the 171-residue chain is MNLQQQLAYCQQHQQRLQLRHFDNETAWQLGEKIKRQAEKQGVALAIDITVNHQTLFSYAMAGTCAENQDWLRRKRNVVELLSTSSYAAGLMLQQRETSLDARYGVSLRDYAALGGAFPLQIKQAGIIGSVNVSGAPHLDDHNLLLQVLADFIGLPIGSIELLTPLTPLSA.

The protein belongs to the UPF0303 family.

In Yersinia pseudotuberculosis serotype O:3 (strain YPIII), this protein is UPF0303 protein YPK_1581.